We begin with the raw amino-acid sequence, 735 residues long: Catalase-peroxidase (735 aa).

Over residues 1–10 (MMDGAQTNSG) the composition is skewed to polar residues. Residues 1–20 (MMDGAQTNSGGCPVMHGGGS) are disordered. Residues 100 to 228 (WHSAGTYRTY…LAAVQMGLIY (129 aa)) constitute a cross-link (tryptophyl-tyrosyl-methioninium (Trp-Tyr) (with M-254)). The active-site Proton acceptor is the His-101. The tryptophyl-tyrosyl-methioninium (Tyr-Met) (with W-100) cross-link spans 228-254 (YVNPQGPDGNPDPLASAFDIRDTFARM). His-269 serves as a coordination point for heme b.

The protein belongs to the peroxidase family. Peroxidase/catalase subfamily. In terms of assembly, homodimer or homotetramer. Heme b is required as a cofactor. In terms of processing, formation of the three residue Trp-Tyr-Met cross-link is important for the catalase, but not the peroxidase activity of the enzyme.

It carries out the reaction H2O2 + AH2 = A + 2 H2O. The enzyme catalyses 2 H2O2 = O2 + 2 H2O. In terms of biological role, bifunctional enzyme with both catalase and broad-spectrum peroxidase activity. The polypeptide is Catalase-peroxidase (Jannaschia sp. (strain CCS1)).